The primary structure comprises 255 residues: Probable ubiquitin carboxyl-terminal hydrolase (255 aa).

The region spanning 13–237 (NWIPLEANPE…IRFNLMGLVK (225 aa)) is the UCH catalytic domain. The segment at 16–21 (PLEANP) is interaction with ubiquitin. Catalysis depends on C103, which acts as the Nucleophile. H177 functions as the Proton donor in the catalytic mechanism. Residues 227–232 (EIRFNL) are interaction with ubiquitin. Residues 235 to 255 (LVKKPNEESEEEEEKEKEETK) are disordered. Residues 242–255 (ESEEEEEKEKEETK) are compositionally biased toward acidic residues.

The protein belongs to the peptidase C12 family.

It localises to the cytoplasm. The catalysed reaction is Thiol-dependent hydrolysis of ester, thioester, amide, peptide and isopeptide bonds formed by the C-terminal Gly of ubiquitin (a 76-residue protein attached to proteins as an intracellular targeting signal).. Ubiquitin-protein hydrolase is involved both in the processing of ubiquitin precursors and of ubiquitinated proteins. This enzyme is a thiol protease that recognizes and hydrolyzes a peptide bond at the C-terminal glycine of either ubiquitin or nedd8. This is Probable ubiquitin carboxyl-terminal hydrolase (uch1) from Dictyostelium discoideum (Social amoeba).